Here is a 365-residue protein sequence, read N- to C-terminus: Probable dual-specificity RNA methyltransferase RlmN (365 aa).

Glu-99 functions as the Proton acceptor in the catalytic mechanism. Residues 105–344 form the Radical SAM core domain; the sequence is QSYGLSVCVT…CVVRQEHGTD (240 aa). Cys-112 and Cys-349 are oxidised to a cystine. [4Fe-4S] cluster-binding residues include Cys-119, Cys-123, and Cys-126. S-adenosyl-L-methionine is bound by residues 171–172, Ser-203, 227–229, and Asn-305; these read GE and SLH. Cys-349 serves as the catalytic S-methylcysteine intermediate.

The protein belongs to the radical SAM superfamily. RlmN family. [4Fe-4S] cluster is required as a cofactor.

It localises to the cytoplasm. The enzyme catalyses adenosine(2503) in 23S rRNA + 2 reduced [2Fe-2S]-[ferredoxin] + 2 S-adenosyl-L-methionine = 2-methyladenosine(2503) in 23S rRNA + 5'-deoxyadenosine + L-methionine + 2 oxidized [2Fe-2S]-[ferredoxin] + S-adenosyl-L-homocysteine. It carries out the reaction adenosine(37) in tRNA + 2 reduced [2Fe-2S]-[ferredoxin] + 2 S-adenosyl-L-methionine = 2-methyladenosine(37) in tRNA + 5'-deoxyadenosine + L-methionine + 2 oxidized [2Fe-2S]-[ferredoxin] + S-adenosyl-L-homocysteine. In terms of biological role, specifically methylates position 2 of adenine 2503 in 23S rRNA and position 2 of adenine 37 in tRNAs. The polypeptide is Probable dual-specificity RNA methyltransferase RlmN (Lactococcus lactis subsp. cremoris (strain MG1363)).